The following is a 143-amino-acid chain: Large ribosomal subunit protein uL11 (143 aa).

It belongs to the universal ribosomal protein uL11 family. In terms of assembly, part of the ribosomal stalk of the 50S ribosomal subunit. Interacts with L10 and the large rRNA to form the base of the stalk. L10 forms an elongated spine to which L12 dimers bind in a sequential fashion forming a multimeric L10(L12)X complex. Post-translationally, one or more lysine residues are methylated.

Its function is as follows. Forms part of the ribosomal stalk which helps the ribosome interact with GTP-bound translation factors. The polypeptide is Large ribosomal subunit protein uL11 (Pseudomonas putida (strain ATCC 700007 / DSM 6899 / JCM 31910 / BCRC 17059 / LMG 24140 / F1)).